The primary structure comprises 253 residues: Tetraspanin-11 (253 aa).

The next 4 helical transmembrane spans lie at L19–I39, V63–I83, Y93–V113, and L220–L240.

The protein belongs to the tetraspanin (TM4SF) family.

The protein localises to the membrane. This Rattus norvegicus (Rat) protein is Tetraspanin-11 (Tspan11).